A 435-amino-acid chain; its full sequence is Putative F-box/kelch-repeat protein At1g20790 (435 aa).

The region spanning methionine 1–isoleucine 49 is the F-box domain. Kelch repeat units lie at residues proline 192–aspartate 238 and leucine 280–proline 335.

This chain is Putative F-box/kelch-repeat protein At1g20790, found in Arabidopsis thaliana (Mouse-ear cress).